A 696-amino-acid polypeptide reads, in one-letter code: DNA ligase (696 aa).

NAD(+) is bound by residues 55 to 59, 105 to 106, and Glu-137; these read DYEFD and SL. The active-site N6-AMP-lysine intermediate is Lys-139. NAD(+) is bound by residues Arg-160, Glu-194, Lys-310, and Lys-334. Positions 428, 431, 446, and 451 each coordinate Zn(2+). One can recognise a BRCT domain in the interval 615–696; sequence NVNPNFVGKN…EFIELKDKFD (82 aa).

This sequence belongs to the NAD-dependent DNA ligase family. LigA subfamily. Mg(2+) is required as a cofactor. Mn(2+) serves as cofactor.

It carries out the reaction NAD(+) + (deoxyribonucleotide)n-3'-hydroxyl + 5'-phospho-(deoxyribonucleotide)m = (deoxyribonucleotide)n+m + AMP + beta-nicotinamide D-nucleotide.. In terms of biological role, DNA ligase that catalyzes the formation of phosphodiester linkages between 5'-phosphoryl and 3'-hydroxyl groups in double-stranded DNA using NAD as a coenzyme and as the energy source for the reaction. It is essential for DNA replication and repair of damaged DNA. This is DNA ligase from Fusobacterium nucleatum subsp. nucleatum (strain ATCC 25586 / DSM 15643 / BCRC 10681 / CIP 101130 / JCM 8532 / KCTC 2640 / LMG 13131 / VPI 4355).